The primary structure comprises 400 residues: Nicotinate phosphoribosyltransferase (400 aa).

H220 is subject to Phosphohistidine; by autocatalysis.

Belongs to the NAPRTase family. Post-translationally, transiently phosphorylated on a His residue during the reaction cycle. Phosphorylation strongly increases the affinity for substrates and increases the rate of nicotinate D-ribonucleotide production. Dephosphorylation regenerates the low-affinity form of the enzyme, leading to product release.

It carries out the reaction nicotinate + 5-phospho-alpha-D-ribose 1-diphosphate + ATP + H2O = nicotinate beta-D-ribonucleotide + ADP + phosphate + diphosphate. It participates in cofactor biosynthesis; NAD(+) biosynthesis; nicotinate D-ribonucleotide from nicotinate: step 1/1. Functionally, catalyzes the synthesis of beta-nicotinate D-ribonucleotide from nicotinate and 5-phospho-D-ribose 1-phosphate at the expense of ATP. This is Nicotinate phosphoribosyltransferase from Salmonella agona (strain SL483).